Consider the following 179-residue polypeptide: Inner membrane-spanning protein YciB (179 aa).

A run of 5 helical transmembrane segments spans residues I22–V42, M50–N70, W76–M96, L121–L141, and F149–I169.

The protein belongs to the YciB family.

It is found in the cell inner membrane. Its function is as follows. Plays a role in cell envelope biogenesis, maintenance of cell envelope integrity and membrane homeostasis. This chain is Inner membrane-spanning protein YciB, found in Citrobacter koseri (strain ATCC BAA-895 / CDC 4225-83 / SGSC4696).